The following is a 243-amino-acid chain: Glutathione S-transferase omega-2 (243 aa).

One can recognise a GST N-terminal domain in the interval Gly22–Lys101. Residue Cys32 is the Nucleophile of the active site. Residues Lys59, Ile72, and Glu85–Ser86 contribute to the glutathione site. The GST C-terminal domain maps to Asp106–Phe231.

This sequence belongs to the GST superfamily. Omega family. As to expression, expressed in a range of tissues, including the liver, kidney, skeletal muscle and prostate. Strongest expression in the testis.

The catalysed reaction is RX + glutathione = an S-substituted glutathione + a halide anion + H(+). The enzyme catalyses L-dehydroascorbate + 2 glutathione = glutathione disulfide + L-ascorbate. It carries out the reaction methylarsonate + 2 glutathione + H(+) = methylarsonous acid + glutathione disulfide + H2O. In terms of biological role, exhibits glutathione-dependent thiol transferase activity. Has high dehydroascorbate reductase activity and may contribute to the recycling of ascorbic acid. Participates in the biotransformation of inorganic arsenic and reduces monomethylarsonic acid (MMA). In Homo sapiens (Human), this protein is Glutathione S-transferase omega-2 (GSTO2).